Reading from the N-terminus, the 404-residue chain is MESRVLSRTTAIAALPKLFRPSREAASFGFATGVKTPVGLVKDGGSLTWGRQLRPVLLLEPVQTGPVCSRREKTAVQPCRAASGSSGEAKTGFLEKYPALVTGSFFFMWYFLNVIFNILNKKIYNYFPYPYFVSVIHLFVGVVYCLASWSVGLPKRAPMDSKLLKLLIPVAVCHAIGHVTSNVSFAAVAVSFTHTIKALEPFFNAAASQFVLGQSIPITLWLSLAPVVIGVSMASLTELSFNWLGFISAMISNVSFTYRSLYSKKAMTDMDSTNIYAYISIIALFVCLPPAIIVEGPQLMKHGFNDAIAKVGLTKFISDLFWVGMFYHLYNQLATNTLERVAPLTHAVGNVLKRVFVIGFSIIAFGNKISTQTAIGTSIAIAGVALYSLIKAKMEEEKRQMKST.

The N-terminal 74 residues, M1–T74, are a transit peptide targeting the chloroplast. At A75–P98 the chain is on the chloroplast intermembrane side. A helical transmembrane segment spans residues A99–L119. Over N120–Y131 the chain is Lumenal. Residues F132 to G152 traverse the membrane as a helical segment. The Chloroplast intermembrane segment spans residues L153–Q209. Residues F210–G230 traverse the membrane as a helical segment. The Lumenal segment spans residues V231–N274. A helical transmembrane segment spans residues I275–V294. The Chloroplast intermembrane portion of the chain corresponds to E295–Q372. A helical transmembrane segment spans residues T373–K393. At M394–T404 the chain is on the lumenal side.

The protein belongs to the TPT transporter family. TPT (TC 2.A.7.9) subfamily. The N-terminus is blocked.

Its subcellular location is the plastid. It localises to the chloroplast membrane. Functionally, mediates the export of fixed carbons from the chloroplasts into the cytosol in the form of triose phosphates. The chain is Triose phosphate/phosphate translocator, chloroplastic from Spinacia oleracea (Spinach).